We begin with the raw amino-acid sequence, 355 residues long: Tetraspanin-10 (355 aa).

Residues 1-33 (MEEGERSPLLSQETAGQKPLSVHRPPTSGCLGP) are disordered. Topologically, residues 1-78 (MEEGERSPLL…LSPGSSCVKY (78 aa)) are cytoplasmic. A helical transmembrane segment spans residues 79–99 (LIFLSNFPFSLLGLLALAIGL). Topologically, residues 100–120 (WGLAVKGSLGSDLGGPLPTDP) are extracellular. The helical transmembrane segment at 121–141 (MLGLALGGLVVSAASLAGCLG) threads the bilayer. The Cytoplasmic segment spans residues 142 to 154 (ALCENTCLLRGFS). Residues 155–175 (GGILAFLVLEAVAGALVVALW) traverse the membrane as a helical segment. Residues 176 to 355 (GPLQDSLEHT…APPAAKPARG (180 aa)) lie on the Extracellular side of the membrane. Cystine bridges form between Cys-212–Cys-279, Cys-213–Cys-243, Cys-229–Cys-237, and Cys-244–Cys-258. N-linked (GlcNAc...) asparagine glycosylation occurs at Asn-228. The segment at 327–355 (YGPGAHGEDRAGPQSPSPGAPPAAKPARG) is disordered. Over residues 341 to 355 (SPSPGAPPAAKPARG) the composition is skewed to pro residues.

Belongs to the tetraspanin (TM4SF) family. Interacts with ADAM10. Expressed in the eye, including iris, ciliary body, retinal pigment epithelium, but not lens (protein level).

The protein resides in the cell membrane. Its function is as follows. Part of TspanC8 subgroup, composed of 6 members that interact with the transmembrane metalloprotease ADAM10. This interaction is required for ADAM10 exit from the endoplasmic reticulum and for enzymatic maturation and trafficking to the cell surface as well as substrate specificity. Different TspanC8/ADAM10 complexes have distinct substrates. The chain is Tetraspanin-10 from Homo sapiens (Human).